The chain runs to 349 residues: MNIKSALNRVVNQLDLTTDEMRDVMREIMTGQCTEAQIGAFLMGMRMKSETIDEIVGAVSVMRELASSVELKTLDGVVDIVGTGGDGANIFNVSTASAFVIAAAGCKVAKHGNRAVSGKSGSADLLEAAGVYLNLTPVQVARCIDSVGIGFMFAQSHHTAMKHTAGPRRELGLRTLFNMLGPLTNPAGVRHQIVGVFNQALCRPLAEVLLRLGSKHVLVVHSQDGLDEFSLAAPTFVAELKNGEVTEYWVQPEDLGIKSQSLYGLAVESPAVSLELIRDALGRRKTENGQKAAEMIVLNAGAALYAADHATSLKEGVALAHDALHTGLAREKLEELGAFTAVFKQENEA.

5-phospho-alpha-D-ribose 1-diphosphate contacts are provided by residues G82, G85–D86, N92–T95, K110–G118, and S122. G82 is an anthranilate binding site. Residue S94 coordinates Mg(2+). An anthranilate-binding site is contributed by N113. Anthranilate is bound at residue R168. Mg(2+) is bound by residues D227 and E228.

This sequence belongs to the anthranilate phosphoribosyltransferase family. Homodimer. It depends on Mg(2+) as a cofactor.

It catalyses the reaction N-(5-phospho-beta-D-ribosyl)anthranilate + diphosphate = 5-phospho-alpha-D-ribose 1-diphosphate + anthranilate. It participates in amino-acid biosynthesis; L-tryptophan biosynthesis; L-tryptophan from chorismate: step 2/5. Its function is as follows. Catalyzes the transfer of the phosphoribosyl group of 5-phosphorylribose-1-pyrophosphate (PRPP) to anthranilate to yield N-(5'-phosphoribosyl)-anthranilate (PRA). The polypeptide is Anthranilate phosphoribosyltransferase (Pseudomonas savastanoi pv. phaseolicola (strain 1448A / Race 6) (Pseudomonas syringae pv. phaseolicola (strain 1448A / Race 6))).